A 344-amino-acid chain; its full sequence is Dihydroorotate dehydrogenase (quinone) (344 aa).

FMN is bound by residues 64-68 and Thr-88; that span reads AGLDK. Substrate is bound at residue Lys-68. 113-117 contacts substrate; sequence NRMGF. 2 residues coordinate FMN: Asn-144 and Asn-177. Position 177 (Asn-177) interacts with substrate. Ser-180 functions as the Nucleophile in the catalytic mechanism. Residue Asn-182 coordinates substrate. FMN-binding residues include Lys-222 and Thr-250. 251–252 is a binding site for substrate; that stretch reads NT. FMN is bound by residues Gly-273, Gly-302, and 323-324; that span reads YS.

It belongs to the dihydroorotate dehydrogenase family. Type 2 subfamily. As to quaternary structure, monomer. FMN serves as cofactor.

It is found in the cell membrane. The enzyme catalyses (S)-dihydroorotate + a quinone = orotate + a quinol. It participates in pyrimidine metabolism; UMP biosynthesis via de novo pathway; orotate from (S)-dihydroorotate (quinone route): step 1/1. Functionally, catalyzes the conversion of dihydroorotate to orotate with quinone as electron acceptor. This is Dihydroorotate dehydrogenase (quinone) from Polynucleobacter necessarius subsp. necessarius (strain STIR1).